A 95-amino-acid polypeptide reads, in one-letter code: RING finger protein Z (95 aa).

A lipid anchor (N-myristoyl glycine; by host) is attached at Gly2. Residues 38 to 74 (CKSCWFANRGLIACSDHYLCLNCLTRLRSQSQFCGIC) form an RING-type; atypical zinc finger. The PTAP/PSAP motif signature appears at 88 to 91 (PSAP).

It belongs to the arenaviridae Z protein family. Interacts with protein NP; this interaction probably directs the encapsidated genome to budding sites. Interacts (via RING domain) with polymerase L; this interaction inhibits viral transcription and replication, Z partially blocks the product exit tunnel for the releasing nascent RNA product. Interacts with the glycoprotein complex; this interaction plays a role in virion budding. Interacts with host eIF4E; this interaction results in eIF4E reduced affinity for its substrate, the 5'-m7 G cap structure. Interacts (via late-budding domain) with host TSG101; this interaction is essential for budding and release of viral particles. Interacts with host RPLP0; this interaction may serve to load ribosome-like particles inside the virion. Interacts with host PML; this interaction induces PML bodies redistribution in the cytoplasm upon viral infection. Post-translationally, myristoylation is required for the role of RING finger protein Z in assembly and budding.

Its subcellular location is the virion. The protein resides in the host cytoplasm. The protein localises to the host perinuclear region. It is found in the host cell membrane. Functionally, plays a crucial role in virion assembly and budding. Expressed late in the virus life cycle, it acts as an inhibitor of viral transcription and RNA synthesis by interacting with the viral polymerase L. Presumably recruits the NP encapsidated genome to cellular membranes at budding sites via direct interaction with NP. Plays critical roles in the final steps of viral release by interacting with host TSG101, a member of the vacuolar protein-sorting pathway and using other cellular host proteins involved in vesicle formation pathway. The budding of the virus progeny occurs after association of protein Z with the viral glycoprotein complex SSP-GP1-GP2 at the cell periphery, step that requires myristoylation of protein Z. Also selectively represses protein production by associating with host eIF4E. In cell-based minigenome assay, has an inhibitory effect on the ribonucleoprotein machinery (vRNP), which is responsible for the replication and transcription of the viral genome. This is RING finger protein Z from Pirital mammarenavirus (isolate Rat/Venezuela/VAV-488/1995) (PIRV).